A 178-amino-acid polypeptide reads, in one-letter code: MATIRIHDEANTTIENQEEVASFLDSQEVIYEQWDITRLPEHLSEKYDLTEEEKQQILDTFETEIKDISTRRGYKAQDVISLSDSNPKLDELLENFKREHHHTDDEVRFIVSGHGIFVIQGQDGTFFDVRLNPGDLISVPENIRHYFTLQEDRKVVAVRIFVTTEGWVPIYEKDSVNQ.

Histidine 100, histidine 102, glutamate 106, and histidine 145 together coordinate Fe(2+). Residues histidine 100, histidine 102, glutamate 106, and histidine 145 each coordinate Ni(2+).

This sequence belongs to the acireductone dioxygenase (ARD) family. As to quaternary structure, monomer. The cofactor is Fe(2+). Ni(2+) is required as a cofactor.

The catalysed reaction is 1,2-dihydroxy-5-(methylsulfanyl)pent-1-en-3-one + O2 = 3-(methylsulfanyl)propanoate + CO + formate + 2 H(+). It catalyses the reaction 1,2-dihydroxy-5-(methylsulfanyl)pent-1-en-3-one + O2 = 4-methylsulfanyl-2-oxobutanoate + formate + 2 H(+). It participates in amino-acid biosynthesis; L-methionine biosynthesis via salvage pathway; L-methionine from S-methyl-5-thio-alpha-D-ribose 1-phosphate: step 5/6. In terms of biological role, catalyzes 2 different reactions between oxygen and the acireductone 1,2-dihydroxy-3-keto-5-methylthiopentene (DHK-MTPene) depending upon the metal bound in the active site. Fe-containing acireductone dioxygenase (Fe-ARD) produces formate and 2-keto-4-methylthiobutyrate (KMTB), the alpha-ketoacid precursor of methionine in the methionine recycle pathway. Ni-containing acireductone dioxygenase (Ni-ARD) produces methylthiopropionate, carbon monoxide and formate, and does not lie on the methionine recycle pathway. In Bacillus subtilis (strain 168), this protein is Acireductone dioxygenase (mtnD).